The chain runs to 856 residues: DNA endonuclease RBBP8 (856 aa).

The essential for binding to the MRN complex and for RPA focus formation on DNA damage stretch occupies residues E25–L48. Coiled coils occupy residues L38 to L87 and I120 to L141. 2 disordered regions span residues D143 to L174 and D423 to N456. The span at E156–V168 shows a compositional bias: acidic residues. Residues S493 to H515 form a damage-recruitment motif region. A disordered region spans residues S695–Q732. The span at C702–Q730 shows a compositional bias: basic and acidic residues. A Phosphothreonine modification is found at T806. At T818 the chain carries Phosphothreonine; by ATR.

This sequence belongs to the COM1/SAE2/CtIP family. In terms of assembly, homotetramer; formed by antiparallel association of helical extensions protruding from the N-termini of two parallel coiled-coil dimers. Interacts with the MRN complex; the interaction links DNA sensing to resection. Interacts with samhd1. Phosphorylation at Thr-818 by atr promotes recruitment to double-strand breaks (DSBs).

It localises to the nucleus. Its subcellular location is the chromosome. In terms of biological role, endonuclease that cooperates with the MRE11-RAD50-NBN (MRN) complex in DNA-end resection, the first step of double-strand break (DSB) repair through the homologous recombination (HR) pathway. Functions downstream of the MRN complex and ATM, promotes ATR activation and its recruitment to DSBs in the S/G2 phase facilitating the generation of ssDNA. Specifically promotes the endonuclease activity of the MRN complex to clear DNA ends containing protein adducts: recruited to DSBs by nbn following phosphorylation, and promotes the endonuclease of mre11 to clear protein-DNA adducts and generate clean double-strand break ends. The MRN complex and rbbp8/CtIP are also required for chromosome alignment during metaphase. The protein is DNA endonuclease RBBP8 (rbbp8) of Xenopus laevis (African clawed frog).